The sequence spans 648 residues: ATP-dependent zinc metalloprotease FtsH 4 (648 aa).

At 1–6 (MKQSHK) the chain is on the cytoplasmic side. Residues 7–27 (TLLLWVLLIMMFLAIWQFLSP) form a helical membrane-spanning segment. The Periplasmic segment spans residues 28 to 111 (DSRPATQVAF…VFFEKEDTSP (84 aa)). The chain crosses the membrane as a helical span at residues 112–132 (FWPGAIMYLLPTVFLLVMFYL). The Cytoplasmic portion of the chain corresponds to 133-648 (FMRQLQAGGG…FGTPKPAPST (516 aa)). 205-212 (GPPGTGKT) serves as a coordination point for ATP. Histidine 427 provides a ligand contact to Zn(2+). Glutamate 428 is an active-site residue. 2 residues coordinate Zn(2+): histidine 431 and aspartate 504. The disordered stretch occupies residues 622-648 (YSDRDRAAKEKRRAASIFGTPKPAPST).

This sequence in the central section; belongs to the AAA ATPase family. The protein in the C-terminal section; belongs to the peptidase M41 family. Homohexamer. Requires Zn(2+) as cofactor.

It localises to the cell inner membrane. In terms of biological role, acts as a processive, ATP-dependent zinc metallopeptidase for both cytoplasmic and membrane proteins. Plays a role in the quality control of integral membrane proteins. This is ATP-dependent zinc metalloprotease FtsH 4 from Sorangium cellulosum (strain So ce56) (Polyangium cellulosum (strain So ce56)).